The sequence spans 476 residues: Probable periplasmic serine endoprotease DegP-like (476 aa).

The signal sequence occupies residues 1–27 (MSIPRLKSYFTILATVLVLGQAVSAQA). Residues H116, D146, and S219 each act as charge relay system in the active site. Substrate contacts are provided by residues 217-219 (GNS) and 274-278 (LGVVI). PDZ domains are found at residues 263 to 354 (LKTG…IRDG) and 360 to 465 (ELTV…LRQG).

This sequence belongs to the peptidase S1C family.

The protein resides in the periplasm. It carries out the reaction Acts on substrates that are at least partially unfolded. The cleavage site P1 residue is normally between a pair of hydrophobic residues, such as Val-|-Val.. In terms of biological role, might be efficient in the degradation of transiently denatured and unfolded proteins which accumulate in the periplasm following stress conditions. This Pseudomonas fluorescens (strain ATCC BAA-477 / NRRL B-23932 / Pf-5) protein is Probable periplasmic serine endoprotease DegP-like (mucD).